We begin with the raw amino-acid sequence, 87 residues long: Mu-theraphotoxin-Hs1a (87 aa).

A signal peptide spans 1–24; the sequence is MVNMKASMFLTFAGLVLLFVVCYA. Residues 25-52 constitute a propeptide that is removed on maturation; sequence SESEEKEFPKEMLSSIFAVDNDFKQEER. 3 cysteine pairs are disulfide-bonded: Cys54/Cys67, Cys61/Cys72, and Cys66/Cys79.

It belongs to the neurotoxin 10 (Hwtx-1) family. 51 (Hntx-8) subfamily. Hntx-8 sub-subfamily. As to expression, expressed by the venom gland.

It is found in the secreted. Its function is as follows. Probable sodium channel pore blocker that dose-dependently inhibits voltage-gated sodium channels (VGSC) on DUM neurons in a way similar to tetrodotoxin. Has no effect on the kinetics of activation and inactivation. Seems not to interact with VGSC in an inactivated state. In vivo, reversibly paralyzes cockroaches, and can enhance the muscular contraction elicited by stimulating its nerve. This Cyriopagopus schmidti (Chinese bird spider) protein is Mu-theraphotoxin-Hs1a.